An 89-amino-acid chain; its full sequence is MTILGSISSIGNVKLISKSNNLSSLSNSSSSLQSMNSIQCGGGCGNGGLLGGVGGLVGGVLVGTGVIVGSVLHGVGSILTGGSNNCGCN.

This sequence belongs to the hssA/B family.

In Dictyostelium discoideum (Social amoeba), this protein is HssA/B-like protein 21 (hssl21).